Here is a 274-residue protein sequence, read N- to C-terminus: 4-hydroxy-3-methylbut-2-enyl diphosphate reductase (274 aa).

C12 lines the [4Fe-4S] cluster pocket. The (2E)-4-hydroxy-3-methylbut-2-enyl diphosphate site is built by H36 and H70. 2 residues coordinate dimethylallyl diphosphate: H36 and H70. Residues H36 and H70 each coordinate isopentenyl diphosphate. A [4Fe-4S] cluster-binding site is contributed by C92. Position 120 (H120) interacts with (2E)-4-hydroxy-3-methylbut-2-enyl diphosphate. Position 120 (H120) interacts with dimethylallyl diphosphate. H120 lines the isopentenyl diphosphate pocket. The active-site Proton donor is E122. Residue T158 participates in (2E)-4-hydroxy-3-methylbut-2-enyl diphosphate binding. [4Fe-4S] cluster is bound at residue C186. 4 residues coordinate (2E)-4-hydroxy-3-methylbut-2-enyl diphosphate: S214, S215, N216, and S258. Dimethylallyl diphosphate contacts are provided by S214, S215, N216, and S258. Isopentenyl diphosphate is bound by residues S214, S215, N216, and S258.

This sequence belongs to the IspH family. The cofactor is [4Fe-4S] cluster.

The enzyme catalyses isopentenyl diphosphate + 2 oxidized [2Fe-2S]-[ferredoxin] + H2O = (2E)-4-hydroxy-3-methylbut-2-enyl diphosphate + 2 reduced [2Fe-2S]-[ferredoxin] + 2 H(+). It carries out the reaction dimethylallyl diphosphate + 2 oxidized [2Fe-2S]-[ferredoxin] + H2O = (2E)-4-hydroxy-3-methylbut-2-enyl diphosphate + 2 reduced [2Fe-2S]-[ferredoxin] + 2 H(+). Its pathway is isoprenoid biosynthesis; dimethylallyl diphosphate biosynthesis; dimethylallyl diphosphate from (2E)-4-hydroxy-3-methylbutenyl diphosphate: step 1/1. It functions in the pathway isoprenoid biosynthesis; isopentenyl diphosphate biosynthesis via DXP pathway; isopentenyl diphosphate from 1-deoxy-D-xylulose 5-phosphate: step 6/6. Functionally, catalyzes the conversion of 1-hydroxy-2-methyl-2-(E)-butenyl 4-diphosphate (HMBPP) into a mixture of isopentenyl diphosphate (IPP) and dimethylallyl diphosphate (DMAPP). Acts in the terminal step of the DOXP/MEP pathway for isoprenoid precursor biosynthesis. The polypeptide is 4-hydroxy-3-methylbut-2-enyl diphosphate reductase (Campylobacter curvus (strain 525.92)).